The sequence spans 189 residues: Peptidyl-tRNA hydrolase (189 aa).

TRNA is bound at residue Tyr15. The Proton acceptor role is filled by His20. 3 residues coordinate tRNA: Phe66, Asn68, and Asn114.

Belongs to the PTH family. Monomer.

It is found in the cytoplasm. It carries out the reaction an N-acyl-L-alpha-aminoacyl-tRNA + H2O = an N-acyl-L-amino acid + a tRNA + H(+). Hydrolyzes ribosome-free peptidyl-tRNAs (with 1 or more amino acids incorporated), which drop off the ribosome during protein synthesis, or as a result of ribosome stalling. Functionally, catalyzes the release of premature peptidyl moieties from peptidyl-tRNA molecules trapped in stalled 50S ribosomal subunits, and thus maintains levels of free tRNAs and 50S ribosomes. The protein is Peptidyl-tRNA hydrolase of Streptococcus pyogenes serotype M3 (strain ATCC BAA-595 / MGAS315).